The sequence spans 378 residues: Glutamate 5-kinase (378 aa).

K20 serves as a coordination point for ATP. Residues S60, D147, and N159 each coordinate substrate. ATP-binding positions include 179 to 180 (TD) and 221 to 227 (TGGMLTK). Residues 286-364 (RGRVVLDDGA…SQIARILGSM (79 aa)) form the PUA domain.

This sequence belongs to the glutamate 5-kinase family.

The protein localises to the cytoplasm. The catalysed reaction is L-glutamate + ATP = L-glutamyl 5-phosphate + ADP. The protein operates within amino-acid biosynthesis; L-proline biosynthesis; L-glutamate 5-semialdehyde from L-glutamate: step 1/2. Its function is as follows. Catalyzes the transfer of a phosphate group to glutamate to form L-glutamate 5-phosphate. This Bordetella parapertussis (strain 12822 / ATCC BAA-587 / NCTC 13253) protein is Glutamate 5-kinase.